The primary structure comprises 207 residues: MIVKFCGFKTESDIKKIKKLEVDAVGFIHYPDSKRHVSLKQLKYLAKIVPDHIEKVVVVVNPQMSTIKRIINQTDINTIQLHGNESIQLIRNIKKLNSKIRIIKAIPATRNLNNNIQKYKDEIDMFIIDTPSITYGGTGQSFDWKLLKKIKGVDFLIAGGLDFEKIKRLEIYSFGQCGYDISTGIESHNEKDFNKMTRILKFLKGDE.

It belongs to the TrpF family.

The catalysed reaction is N-(5-phospho-beta-D-ribosyl)anthranilate = 1-(2-carboxyphenylamino)-1-deoxy-D-ribulose 5-phosphate. Its pathway is amino-acid biosynthesis; L-tryptophan biosynthesis; L-tryptophan from chorismate: step 3/5. This chain is N-(5'-phosphoribosyl)anthranilate isomerase, found in Staphylococcus epidermidis (strain ATCC 35984 / DSM 28319 / BCRC 17069 / CCUG 31568 / BM 3577 / RP62A).